Consider the following 364-residue polypeptide: UDP-N-acetylglucosamine--N-acetylmuramyl-(pentapeptide) pyrophosphoryl-undecaprenol N-acetylglucosamine transferase 1 (364 aa).

UDP-N-acetyl-alpha-D-glucosamine contacts are provided by residues 10-12 (TGG), N124, S195, I250, and Q295.

Belongs to the glycosyltransferase 28 family. MurG subfamily.

It localises to the cell membrane. The catalysed reaction is di-trans,octa-cis-undecaprenyl diphospho-N-acetyl-alpha-D-muramoyl-L-alanyl-D-glutamyl-meso-2,6-diaminopimeloyl-D-alanyl-D-alanine + UDP-N-acetyl-alpha-D-glucosamine = di-trans,octa-cis-undecaprenyl diphospho-[N-acetyl-alpha-D-glucosaminyl-(1-&gt;4)]-N-acetyl-alpha-D-muramoyl-L-alanyl-D-glutamyl-meso-2,6-diaminopimeloyl-D-alanyl-D-alanine + UDP + H(+). It functions in the pathway cell wall biogenesis; peptidoglycan biosynthesis. In terms of biological role, cell wall formation. Catalyzes the transfer of a GlcNAc subunit on undecaprenyl-pyrophosphoryl-MurNAc-pentapeptide (lipid intermediate I) to form undecaprenyl-pyrophosphoryl-MurNAc-(pentapeptide)GlcNAc (lipid intermediate II). The polypeptide is UDP-N-acetylglucosamine--N-acetylmuramyl-(pentapeptide) pyrophosphoryl-undecaprenol N-acetylglucosamine transferase 1 (Bacillus cereus (strain ATCC 10987 / NRS 248)).